We begin with the raw amino-acid sequence, 205 residues long: NADH-quinone oxidoreductase subunit C (205 aa).

This sequence belongs to the complex I 30 kDa subunit family. As to quaternary structure, NDH-1 is composed of 14 different subunits. Subunits NuoB, C, D, E, F, and G constitute the peripheral sector of the complex.

Its subcellular location is the cell inner membrane. It catalyses the reaction a quinone + NADH + 5 H(+)(in) = a quinol + NAD(+) + 4 H(+)(out). NDH-1 shuttles electrons from NADH, via FMN and iron-sulfur (Fe-S) centers, to quinones in the respiratory chain. The immediate electron acceptor for the enzyme in this species is believed to be ubiquinone. Couples the redox reaction to proton translocation (for every two electrons transferred, four hydrogen ions are translocated across the cytoplasmic membrane), and thus conserves the redox energy in a proton gradient. In Nitrosospira multiformis (strain ATCC 25196 / NCIMB 11849 / C 71), this protein is NADH-quinone oxidoreductase subunit C.